The following is a 147-amino-acid chain: Formiminotransferase N-terminal subdomain-containing protein (147 aa).

Positions 1-20 are cleaved as a signal peptide; sequence MSSSRVGLRLAACLLNVSEA.

The protein belongs to the formiminotransferase family. Widely expressed with highest levels in liver and skeletal muscle, and moderate levels in kidney, bone and pancreas.

The polypeptide is Formiminotransferase N-terminal subdomain-containing protein (FTCDNL1) (Homo sapiens (Human)).